A 141-amino-acid chain; its full sequence is Regulator of ribonuclease activity B (141 aa).

Residues 112–141 (GTYFEDPNAPDDEDDNDDLFPPEEDEPRLH) are disordered. The span at 119 to 141 (NAPDDEDDNDDLFPPEEDEPRLH) shows a compositional bias: acidic residues.

Belongs to the RraB family. As to quaternary structure, interacts with the C-terminal region of Rne.

The protein localises to the cytoplasm. In terms of biological role, globally modulates RNA abundance by binding to RNase E (Rne) and regulating its endonucleolytic activity. Can modulate Rne action in a substrate-dependent manner by altering the composition of the degradosome. The sequence is that of Regulator of ribonuclease activity B from Xenorhabdus nematophila (strain ATCC 19061 / DSM 3370 / CCUG 14189 / LMG 1036 / NCIMB 9965 / AN6).